The chain runs to 97 residues: Small cell adhesion glycoprotein (97 aa).

At 1-36 (MNNLPATPSPEELMTTPVFQAPETLSPQAEEASTAL) the chain is on the extracellular side. T7 is a glycosylation site (O-linked (GalNAc...) threonine). O-linked (GalNAc...) serine glycosylation occurs at S9. 3 O-linked (GalNAc...) threonine glycosylation sites follow: T15, T16, and T24. S26 carries an O-linked (GalNAc...) serine glycan. The helical; Signal-anchor for type III membrane protein transmembrane segment at 37 to 57 (IAVVITVVFLTLLSVVTLIFF) threads the bilayer. Residues 58 to 97 (HLYKNKGSYVTYEPAEGEPSAILQMETDSAKGREKEEYFI) lie on the Cytoplasmic side of the membrane.

This sequence belongs to the SMAGP family. In terms of processing, O-glycosylated. The O-glycan is modified with sialic acid residues.

Its subcellular location is the cell membrane. It is found in the cytoplasmic vesicle membrane. May play a role in epithelial cell-cell contacts. May play a role in tumor invasiveness and metastasis formation. This chain is Small cell adhesion glycoprotein (Smagp), found in Mus musculus (Mouse).